The primary structure comprises 121 residues: Large ribosomal subunit protein uL18 (121 aa).

Belongs to the universal ribosomal protein uL18 family. Part of the 50S ribosomal subunit; part of the 5S rRNA/L5/L18/L25 subcomplex. Contacts the 5S and 23S rRNAs.

In terms of biological role, this is one of the proteins that bind and probably mediate the attachment of the 5S RNA into the large ribosomal subunit, where it forms part of the central protuberance. The chain is Large ribosomal subunit protein uL18 from Burkholderia mallei (strain NCTC 10247).